A 173-amino-acid chain; its full sequence is Large ribosomal subunit protein uL10 (173 aa).

The protein belongs to the universal ribosomal protein uL10 family. In terms of assembly, part of the ribosomal stalk of the 50S ribosomal subunit. The N-terminus interacts with L11 and the large rRNA to form the base of the stalk. The C-terminus forms an elongated spine to which L12 dimers bind in a sequential fashion forming a multimeric L10(L12)X complex.

Its function is as follows. Forms part of the ribosomal stalk, playing a central role in the interaction of the ribosome with GTP-bound translation factors. This is Large ribosomal subunit protein uL10 from Maridesulfovibrio salexigens (strain ATCC 14822 / DSM 2638 / NCIMB 8403 / VKM B-1763) (Desulfovibrio salexigens).